Here is a 243-residue protein sequence, read N- to C-terminus: Exosome complex component Rrp41 (243 aa).

Belongs to the RNase PH family. Rrp41 subfamily. Component of the archaeal exosome complex. Forms a hexameric ring-like arrangement composed of 3 Rrp41-Rrp42 heterodimers. The hexameric ring associates with a trimer of Rrp4 and/or Csl4 subunits.

Its subcellular location is the cytoplasm. Catalytic component of the exosome, which is a complex involved in RNA degradation. Has 3'-&gt;5' exoribonuclease activity. Can also synthesize heteromeric RNA-tails. The sequence is that of Exosome complex component Rrp41 from Cenarchaeum symbiosum (strain A).